Reading from the N-terminus, the 287-residue chain is Nucleoid occlusion protein (287 aa).

The H-T-H motif DNA-binding region spans 146–165 (EALAQRVGKSQSAIANKMRL).

It belongs to the ParB family.

It localises to the cytoplasm. The protein localises to the nucleoid. Its function is as follows. Effects nucleoid occlusion by binding relatively nonspecifically to DNA and preventing the assembly of the division machinery in the vicinity of the nucleoid, especially under conditions that disturb the cell cycle. It helps to coordinate cell division and chromosome segregation by preventing the formation of the Z ring through the nucleoid, which would cause chromosome breakage. This chain is Nucleoid occlusion protein, found in Listeria monocytogenes serotype 4a (strain HCC23).